Here is a 328-residue protein sequence, read N- to C-terminus: Serine protease 27 (328 aa).

An N-terminal signal peptide occupies residues 1–22 (MRQPHIAALLLLPLLLRSGTEG). A propeptide spans 23–37 (ARTLRACGHPKMFNR) (activation peptide). In terms of domain architecture, Peptidase S1 spans 38–280 (MVGGENALEG…HHKWIHQIIP (243 aa)). Residues C63 and C79 are joined by a disulfide bond. The Charge relay system role is filled by H78. Residue N82 is glycosylated (N-linked (GlcNAc...) asparagine). The Charge relay system role is filled by D127. Intrachain disulfides connect C161/C238, C194/C217, and C228/C256. The Charge relay system role is filled by S232.

This sequence belongs to the peptidase S1 family.

The protein resides in the secreted. The sequence is that of Serine protease 27 (Prss27) from Mus musculus (Mouse).